We begin with the raw amino-acid sequence, 421 residues long: Bestrophin homolog 2 (421 aa).

The next 4 helical transmembrane spans lie at 28–48 (IWKA…IISV), 73–93 (LSFI…VDRW), 239–259 (LMYP…SIIA), and 275–295 (VYFP…LKVI).

It belongs to the anion channel-forming bestrophin (TC 1.A.46) family. Calcium-sensitive chloride channel subfamily. As to quaternary structure, forms oligomers.

It localises to the cell membrane. Its function is as follows. Forms chloride channels. The sequence is that of Bestrophin homolog 2 (best-2) from Caenorhabditis elegans.